Reading from the N-terminus, the 222-residue chain is Protein Thf1 (222 aa).

The stretch at I169–T208 forms a coiled coil. Residues V197–A222 form a disordered region. Low complexity predominate over residues S209–A222.

The protein belongs to the THF1 family.

Its function is as follows. May be involved in photosynthetic membrane biogenesis. In Thermosynechococcus vestitus (strain NIES-2133 / IAM M-273 / BP-1), this protein is Protein Thf1.